A 362-amino-acid chain; its full sequence is Class I histocompatibility antigen, Gogo-B*0102 alpha chain (362 aa).

The first 24 residues, 1–24 (MRVTAPRTLLLLLSAALALTETWA), serve as a signal peptide directing secretion. The interval 25-114 (GSHSMRYFDT…ALRYYNQSEA (90 aa)) is alpha-1. The Extracellular segment spans residues 25–308 (GSHSMRYFDT…EPSSQSTIPI (284 aa)). The N-linked (GlcNAc...) asparagine glycan is linked to Asn-110. The segment at 115–206 (GSHTFQRMFG…ENGRETLQRA (92 aa)) is alpha-2. 2 disulfide bridges follow: Cys-125-Cys-188 and Cys-227-Cys-283. The alpha-3 stretch occupies residues 207 to 298 (DTPKTHVTHH…GLPKPLTLRW (92 aa)). The Ig-like C1-type domain occupies 209–295 (PKTHVTHHPI…QHEGLPKPLT (87 aa)). A connecting peptide region spans residues 299–308 (EPSSQSTIPI). A helical transmembrane segment spans residues 309-332 (VGIVAGLAVLAVVVIGAVVTAVIC). Residues 333–362 (RRKSSGGKGGSYSQAASSDSAQGSDVSLTA) are Cytoplasmic-facing. The interval 335–362 (KSSGGKGGSYSQAASSDSAQGSDVSLTA) is disordered. Low complexity predominate over residues 343–362 (SYSQAASSDSAQGSDVSLTA).

Belongs to the MHC class I family. As to quaternary structure, heterodimer of an alpha chain and a beta chain (beta-2-microglobulin).

It localises to the membrane. Functionally, involved in the presentation of foreign antigens to the immune system. The protein is Class I histocompatibility antigen, Gogo-B*0102 alpha chain of Gorilla gorilla gorilla (Western lowland gorilla).